Consider the following 520-residue polypeptide: Protein U4 (520 aa).

It belongs to the herpesviridae U4 family.

The sequence is that of Protein U4 from Elephantid herpesvirus 1 (isolate Asian elephant/Berlin/Kiba/1998) (EIHV-1).